We begin with the raw amino-acid sequence, 439 residues long: Serine--tRNA ligase (439 aa).

247–249 provides a ligand contact to L-serine; that stretch reads TSE. 278–280 is an ATP binding site; that stretch reads RSE. Position 301 (Glu-301) interacts with L-serine. ATP is bound at residue 365-368; the sequence is EISS. Residue Ser-400 coordinates L-serine.

Belongs to the class-II aminoacyl-tRNA synthetase family. Type-1 seryl-tRNA synthetase subfamily. As to quaternary structure, homodimer. The tRNA molecule binds across the dimer.

It localises to the cytoplasm. The enzyme catalyses tRNA(Ser) + L-serine + ATP = L-seryl-tRNA(Ser) + AMP + diphosphate + H(+). It carries out the reaction tRNA(Sec) + L-serine + ATP = L-seryl-tRNA(Sec) + AMP + diphosphate + H(+). It functions in the pathway aminoacyl-tRNA biosynthesis; selenocysteinyl-tRNA(Sec) biosynthesis; L-seryl-tRNA(Sec) from L-serine and tRNA(Sec): step 1/1. Catalyzes the attachment of serine to tRNA(Ser). Is also able to aminoacylate tRNA(Sec) with serine, to form the misacylated tRNA L-seryl-tRNA(Sec), which will be further converted into selenocysteinyl-tRNA(Sec). In Paracidovorax citrulli (strain AAC00-1) (Acidovorax citrulli), this protein is Serine--tRNA ligase.